The following is a 318-amino-acid chain: uncharacterized protein (318 aa).

4 consecutive transmembrane segments (helical) span residues 112–132 (VIGV…PVFL), 147–167 (IAIE…FLSM), 209–229 (CGSS…LLVP), and 237–257 (VIDR…VLQL).

It localises to the cell membrane. This is an uncharacterized protein from Bacillus subtilis (strain 168).